Reading from the N-terminus, the 399-residue chain is Acetate kinase (399 aa).

Asparagine 8 contacts Mg(2+). Lysine 15 lines the ATP pocket. Residue arginine 89 participates in substrate binding. The active-site Proton donor/acceptor is aspartate 146. ATP contacts are provided by residues 206–210 (HVGNG), 283–285 (DMR), and 331–335 (GMGEN). Glutamate 383 is a binding site for Mg(2+).

It belongs to the acetokinase family. In terms of assembly, homodimer. It depends on Mg(2+) as a cofactor. The cofactor is Mn(2+).

The protein localises to the cytoplasm. The enzyme catalyses acetate + ATP = acetyl phosphate + ADP. It functions in the pathway metabolic intermediate biosynthesis; acetyl-CoA biosynthesis; acetyl-CoA from acetate: step 1/2. Functionally, catalyzes the formation of acetyl phosphate from acetate and ATP. Can also catalyze the reverse reaction. This is Acetate kinase from Streptococcus equi subsp. zooepidemicus (strain H70).